We begin with the raw amino-acid sequence, 173 residues long: Crossover junction endodeoxyribonuclease RuvC (173 aa).

Active-site residues include Asp-8, Glu-67, and Asp-139. Residues Asp-8, Glu-67, and Asp-139 each coordinate Mg(2+).

Belongs to the RuvC family. In terms of assembly, homodimer which binds Holliday junction (HJ) DNA. The HJ becomes 2-fold symmetrical on binding to RuvC with unstacked arms; it has a different conformation from HJ DNA in complex with RuvA. In the full resolvosome a probable DNA-RuvA(4)-RuvB(12)-RuvC(2) complex forms which resolves the HJ. Requires Mg(2+) as cofactor.

The protein localises to the cytoplasm. The catalysed reaction is Endonucleolytic cleavage at a junction such as a reciprocal single-stranded crossover between two homologous DNA duplexes (Holliday junction).. The RuvA-RuvB-RuvC complex processes Holliday junction (HJ) DNA during genetic recombination and DNA repair. Endonuclease that resolves HJ intermediates. Cleaves cruciform DNA by making single-stranded nicks across the HJ at symmetrical positions within the homologous arms, yielding a 5'-phosphate and a 3'-hydroxyl group; requires a central core of homology in the junction. The consensus cleavage sequence is 5'-(A/T)TT(C/G)-3'. Cleavage occurs on the 3'-side of the TT dinucleotide at the point of strand exchange. HJ branch migration catalyzed by RuvA-RuvB allows RuvC to scan DNA until it finds its consensus sequence, where it cleaves and resolves the cruciform DNA. This is Crossover junction endodeoxyribonuclease RuvC from Photorhabdus laumondii subsp. laumondii (strain DSM 15139 / CIP 105565 / TT01) (Photorhabdus luminescens subsp. laumondii).